A 96-amino-acid polypeptide reads, in one-letter code: Putative septation protein SpoVG (96 aa).

This sequence belongs to the SpoVG family.

Could be involved in septation. In Borrelia hermsii (strain HS1 / DAH), this protein is Putative septation protein SpoVG.